The following is a 427-amino-acid chain: Glutamate-1-semialdehyde 2,1-aminomutase (427 aa).

N6-(pyridoxal phosphate)lysine is present on lysine 267.

It belongs to the class-III pyridoxal-phosphate-dependent aminotransferase family. HemL subfamily. As to quaternary structure, homodimer. It depends on pyridoxal 5'-phosphate as a cofactor.

The protein localises to the cytoplasm. It carries out the reaction (S)-4-amino-5-oxopentanoate = 5-aminolevulinate. It functions in the pathway porphyrin-containing compound metabolism; protoporphyrin-IX biosynthesis; 5-aminolevulinate from L-glutamyl-tRNA(Glu): step 2/2. This chain is Glutamate-1-semialdehyde 2,1-aminomutase, found in Geobacter sulfurreducens (strain ATCC 51573 / DSM 12127 / PCA).